A 209-amino-acid chain; its full sequence is Large ribosomal subunit protein uL3 (209 aa).

An N5-methylglutamine modification is found at glutamine 150.

Belongs to the universal ribosomal protein uL3 family. As to quaternary structure, part of the 50S ribosomal subunit. Forms a cluster with proteins L14 and L19. Post-translationally, methylated by PrmB.

In terms of biological role, one of the primary rRNA binding proteins, it binds directly near the 3'-end of the 23S rRNA, where it nucleates assembly of the 50S subunit. The polypeptide is Large ribosomal subunit protein uL3 (Buchnera aphidicola subsp. Acyrthosiphon pisum (strain 5A)).